We begin with the raw amino-acid sequence, 298 residues long: N-acetylmuramic acid 6-phosphate etherase (298 aa).

One can recognise an SIS domain in the interval 55-218 (IHAQVSGGGR…STGLMIKSGK (164 aa)). Glu-83 (proton donor) is an active-site residue. Glu-114 is an active-site residue.

This sequence belongs to the GCKR-like family. MurNAc-6-P etherase subfamily. Homodimer.

It catalyses the reaction N-acetyl-D-muramate 6-phosphate + H2O = N-acetyl-D-glucosamine 6-phosphate + (R)-lactate. Its pathway is amino-sugar metabolism; 1,6-anhydro-N-acetylmuramate degradation. It functions in the pathway amino-sugar metabolism; N-acetylmuramate degradation. The protein operates within cell wall biogenesis; peptidoglycan recycling. Functionally, specifically catalyzes the cleavage of the D-lactyl ether substituent of MurNAc 6-phosphate, producing GlcNAc 6-phosphate and D-lactate. Together with AnmK, is also required for the utilization of anhydro-N-acetylmuramic acid (anhMurNAc) either imported from the medium or derived from its own cell wall murein, and thus plays a role in cell wall recycling. This is N-acetylmuramic acid 6-phosphate etherase from Shigella sonnei (strain Ss046).